The chain runs to 312 residues: uncharacterized protein (312 aa).

Transmembrane regions (helical) follow at residues 9–29 (LTLTFTFLYYSIPMLIVGLFI), 115–135 (LATLGFFGIIYFIILVLIGFI), 187–207 (ITIASIITSFLIEFGFFDYIT), 224–244 (ITVAVTQPINYIGAFVLAGEF), 264–284 (ILSSIPALRFLAPYYIGIYGF), and 292–312 (MISTLVRILITALFVIITLIL).

The protein resides in the cell membrane. This is an uncharacterized protein from Methanocaldococcus jannaschii (strain ATCC 43067 / DSM 2661 / JAL-1 / JCM 10045 / NBRC 100440) (Methanococcus jannaschii).